The following is a 572-amino-acid chain: Methionine--tRNA ligase (572 aa).

The short motif at 11–21 (PYINGIKHLGN) is the 'HIGH' region element. The Zn(2+) site is built by Cys143, Cys146, Cys156, and Cys159. Residues 346 to 350 (QFSTS) carry the 'KMSKS' region motif. Thr349 contributes to the ATP binding site.

It belongs to the class-I aminoacyl-tRNA synthetase family. MetG type 1 subfamily. Monomer. Requires Zn(2+) as cofactor.

The protein localises to the cytoplasm. It carries out the reaction tRNA(Met) + L-methionine + ATP = L-methionyl-tRNA(Met) + AMP + diphosphate. Its function is as follows. Is required not only for elongation of protein synthesis but also for the initiation of all mRNA translation through initiator tRNA(fMet) aminoacylation. The chain is Methionine--tRNA ligase from Paracoccus denitrificans (strain Pd 1222).